Consider the following 109-residue polypeptide: Nucleoid-associated protein Sputw3181_1707 (109 aa).

It belongs to the YbaB/EbfC family. Homodimer.

It localises to the cytoplasm. It is found in the nucleoid. Its function is as follows. Binds to DNA and alters its conformation. May be involved in regulation of gene expression, nucleoid organization and DNA protection. The polypeptide is Nucleoid-associated protein Sputw3181_1707 (Shewanella sp. (strain W3-18-1)).